We begin with the raw amino-acid sequence, 357 residues long: 3-isopropylmalate dehydrogenase (357 aa).

The substrate site is built by Arg97, Arg107, Arg135, and Asp224. 3 residues coordinate Mg(2+): Asp224, Asp248, and Asp252. NAD(+) is bound at residue 282 to 294; that stretch reads GSAPDIAGKNIAN.

It belongs to the isocitrate and isopropylmalate dehydrogenases family. LeuB type 1 subfamily. Homodimer. Requires Mg(2+) as cofactor. Mn(2+) serves as cofactor.

It is found in the cytoplasm. It catalyses the reaction (2R,3S)-3-isopropylmalate + NAD(+) = 4-methyl-2-oxopentanoate + CO2 + NADH. The protein operates within amino-acid biosynthesis; L-leucine biosynthesis; L-leucine from 3-methyl-2-oxobutanoate: step 3/4. Functionally, catalyzes the oxidation of 3-carboxy-2-hydroxy-4-methylpentanoate (3-isopropylmalate) to 3-carboxy-4-methyl-2-oxopentanoate. The product decarboxylates to 4-methyl-2 oxopentanoate. This is 3-isopropylmalate dehydrogenase from Prochlorococcus marinus subsp. pastoris (strain CCMP1986 / NIES-2087 / MED4).